The primary structure comprises 383 residues: S-adenosylmethionine synthase (383 aa).

H22 contributes to the ATP binding site. Residue D24 participates in Mg(2+) binding. E50 is a K(+) binding site. L-methionine contacts are provided by E63 and Q99. A flexible loop region spans residues 99–109 (QSLEINQAVLK). Residues 160-162 (DMK), D235, 241-242 (RK), S258, and K262 each bind ATP. Residue D235 coordinates L-methionine. L-methionine is bound at residue K266.

This sequence belongs to the AdoMet synthase family. As to quaternary structure, homotetramer; dimer of dimers. Mg(2+) is required as a cofactor. It depends on K(+) as a cofactor.

Its subcellular location is the cytoplasm. The catalysed reaction is L-methionine + ATP + H2O = S-adenosyl-L-methionine + phosphate + diphosphate. The protein operates within amino-acid biosynthesis; S-adenosyl-L-methionine biosynthesis; S-adenosyl-L-methionine from L-methionine: step 1/1. In terms of biological role, catalyzes the formation of S-adenosylmethionine (AdoMet) from methionine and ATP. The overall synthetic reaction is composed of two sequential steps, AdoMet formation and the subsequent tripolyphosphate hydrolysis which occurs prior to release of AdoMet from the enzyme. The sequence is that of S-adenosylmethionine synthase from Mycoplasma genitalium (strain ATCC 33530 / DSM 19775 / NCTC 10195 / G37) (Mycoplasmoides genitalium).